Consider the following 114-residue polypeptide: Fumarate reductase subunit D (114 aa).

3 helical membrane-spanning segments follow: residues 25 to 45, 50 to 70, and 94 to 114; these read SGLAFPVLILILGILLPFGII, IIAFSHHWFGKLVILALTIFP, and LIFYGLAAVYSFIVLFAVIAI.

Belongs to the FrdD family. Part of an enzyme complex containing four subunits: a flavoprotein (FrdA), an iron-sulfur protein (FrdB), and two hydrophobic anchor proteins (FrdC and FrdD).

It is found in the cell inner membrane. Functionally, anchors the catalytic components of the fumarate reductase complex to the cell membrane, binds quinones. The sequence is that of Fumarate reductase subunit D from Mannheimia succiniciproducens (strain KCTC 0769BP / MBEL55E).